Here is a 212-residue protein sequence, read N- to C-terminus: Thiamine-phosphate synthase (212 aa).

Residues Q35–K39 and N67 contribute to the 4-amino-2-methyl-5-(diphosphooxymethyl)pyrimidine site. D68 and D87 together coordinate Mg(2+). Residue S106 participates in 4-amino-2-methyl-5-(diphosphooxymethyl)pyrimidine binding. Residue T132–S134 coordinates 2-[(2R,5Z)-2-carboxy-4-methylthiazol-5(2H)-ylidene]ethyl phosphate. K135 contributes to the 4-amino-2-methyl-5-(diphosphooxymethyl)pyrimidine binding site. Residues G163 and I183–S184 contribute to the 2-[(2R,5Z)-2-carboxy-4-methylthiazol-5(2H)-ylidene]ethyl phosphate site.

The protein belongs to the thiamine-phosphate synthase family. Mg(2+) is required as a cofactor.

It catalyses the reaction 2-[(2R,5Z)-2-carboxy-4-methylthiazol-5(2H)-ylidene]ethyl phosphate + 4-amino-2-methyl-5-(diphosphooxymethyl)pyrimidine + 2 H(+) = thiamine phosphate + CO2 + diphosphate. The enzyme catalyses 2-(2-carboxy-4-methylthiazol-5-yl)ethyl phosphate + 4-amino-2-methyl-5-(diphosphooxymethyl)pyrimidine + 2 H(+) = thiamine phosphate + CO2 + diphosphate. The catalysed reaction is 4-methyl-5-(2-phosphooxyethyl)-thiazole + 4-amino-2-methyl-5-(diphosphooxymethyl)pyrimidine + H(+) = thiamine phosphate + diphosphate. Its pathway is cofactor biosynthesis; thiamine diphosphate biosynthesis; thiamine phosphate from 4-amino-2-methyl-5-diphosphomethylpyrimidine and 4-methyl-5-(2-phosphoethyl)-thiazole: step 1/1. Its function is as follows. Condenses 4-methyl-5-(beta-hydroxyethyl)thiazole monophosphate (THZ-P) and 2-methyl-4-amino-5-hydroxymethyl pyrimidine pyrophosphate (HMP-PP) to form thiamine monophosphate (TMP). The chain is Thiamine-phosphate synthase from Methanocella arvoryzae (strain DSM 22066 / NBRC 105507 / MRE50).